Here is a 240-residue protein sequence, read N- to C-terminus: 1-(5-phosphoribosyl)-5-[(5-phosphoribosylamino)methylideneamino] imidazole-4-carboxamide isomerase (240 aa).

D8 functions as the Proton acceptor in the catalytic mechanism. Residue D129 is the Proton donor of the active site.

The protein belongs to the HisA/HisF family.

It is found in the cytoplasm. The enzyme catalyses 1-(5-phospho-beta-D-ribosyl)-5-[(5-phospho-beta-D-ribosylamino)methylideneamino]imidazole-4-carboxamide = 5-[(5-phospho-1-deoxy-D-ribulos-1-ylimino)methylamino]-1-(5-phospho-beta-D-ribosyl)imidazole-4-carboxamide. Its pathway is amino-acid biosynthesis; L-histidine biosynthesis; L-histidine from 5-phospho-alpha-D-ribose 1-diphosphate: step 4/9. The sequence is that of 1-(5-phosphoribosyl)-5-[(5-phosphoribosylamino)methylideneamino] imidazole-4-carboxamide isomerase from Listeria welshimeri serovar 6b (strain ATCC 35897 / DSM 20650 / CCUG 15529 / CIP 8149 / NCTC 11857 / SLCC 5334 / V8).